A 231-amino-acid chain; its full sequence is Cell cycle transcriptional regulator CtrA (231 aa).

A Response regulatory domain is found at 2 to 116 (RVLLIEDDSA…EMIARIHAVV (115 aa)). D51 carries the 4-aspartylphosphate modification. Residues 124–223 (QSVIKTGDIV…VWGRGYVLRD (100 aa)) constitute a DNA-binding region (ompR/PhoB-type).

Phosphorylated by CckA.

Forms part of a two-component regulatory system CtrA/CckA that controls multiple events in the cell cycle, including cell division, stalk synthesis and cell cycle-specific transcription. Binds to a group of cell cycle-regulated promoters critical for DNA replication, DNA methylation, and class II flagellar biogenesis. The chain is Cell cycle transcriptional regulator CtrA (ctrA) from Caulobacter vibrioides (strain ATCC 19089 / CIP 103742 / CB 15) (Caulobacter crescentus).